A 233-amino-acid chain; its full sequence is DNA repair protein RecO (233 aa).

It belongs to the RecO family.

Involved in DNA repair and RecF pathway recombination. In Psychromonas ingrahamii (strain DSM 17664 / CCUG 51855 / 37), this protein is DNA repair protein RecO.